The sequence spans 142 residues: Putative pre-16S rRNA nuclease (142 aa).

It belongs to the YqgF nuclease family.

It localises to the cytoplasm. Functionally, could be a nuclease involved in processing of the 5'-end of pre-16S rRNA. The polypeptide is Putative pre-16S rRNA nuclease (Staphylococcus epidermidis (strain ATCC 35984 / DSM 28319 / BCRC 17069 / CCUG 31568 / BM 3577 / RP62A)).